Here is a 194-residue protein sequence, read N- to C-terminus: Crossover junction endodeoxyribonuclease RuvC (194 aa).

Active-site residues include aspartate 7, glutamate 68, and aspartate 141. Positions 7, 68, and 141 each coordinate Mg(2+).

Belongs to the RuvC family. In terms of assembly, homodimer which binds Holliday junction (HJ) DNA. The HJ becomes 2-fold symmetrical on binding to RuvC with unstacked arms; it has a different conformation from HJ DNA in complex with RuvA. In the full resolvosome a probable DNA-RuvA(4)-RuvB(12)-RuvC(2) complex forms which resolves the HJ. Mg(2+) serves as cofactor.

It localises to the cytoplasm. The enzyme catalyses Endonucleolytic cleavage at a junction such as a reciprocal single-stranded crossover between two homologous DNA duplexes (Holliday junction).. The RuvA-RuvB-RuvC complex processes Holliday junction (HJ) DNA during genetic recombination and DNA repair. Endonuclease that resolves HJ intermediates. Cleaves cruciform DNA by making single-stranded nicks across the HJ at symmetrical positions within the homologous arms, yielding a 5'-phosphate and a 3'-hydroxyl group; requires a central core of homology in the junction. The consensus cleavage sequence is 5'-(A/T)TT(C/G)-3'. Cleavage occurs on the 3'-side of the TT dinucleotide at the point of strand exchange. HJ branch migration catalyzed by RuvA-RuvB allows RuvC to scan DNA until it finds its consensus sequence, where it cleaves and resolves the cruciform DNA. This chain is Crossover junction endodeoxyribonuclease RuvC, found in Mycolicibacterium vanbaalenii (strain DSM 7251 / JCM 13017 / BCRC 16820 / KCTC 9966 / NRRL B-24157 / PYR-1) (Mycobacterium vanbaalenii).